A 442-amino-acid chain; its full sequence is Tryptophan synthase beta chain 2 (442 aa).

Lys-122 bears the N6-(pyridoxal phosphate)lysine mark.

This sequence belongs to the TrpB family. Tetramer of two alpha and two beta chains. It depends on pyridoxal 5'-phosphate as a cofactor.

It catalyses the reaction (1S,2R)-1-C-(indol-3-yl)glycerol 3-phosphate + L-serine = D-glyceraldehyde 3-phosphate + L-tryptophan + H2O. It participates in amino-acid biosynthesis; L-tryptophan biosynthesis; L-tryptophan from chorismate: step 5/5. Its function is as follows. The beta subunit is responsible for the synthesis of L-tryptophan from indole and L-serine. This Methanosarcina mazei (strain ATCC BAA-159 / DSM 3647 / Goe1 / Go1 / JCM 11833 / OCM 88) (Methanosarcina frisia) protein is Tryptophan synthase beta chain 2 (trpB2).